The chain runs to 1155 residues: MIKRVHLGQGKAEEILNLPNLIEIQLNSYEKFLQLERLKNNKPLLNEGLESVFRDVFPMKSSNGEVALEYEKYYIEYDSISFTEKECKRKGQSYEAVLKIRLNLQFLTTGEIRQKDVYMGTIPLMTDRGTFIVNGAERVIVSQIHRSPGVVFYKEKDLYYARIIPYRGSWLEFEIDSKKDYLYVKIDRKKRILVTLFLRALGLDTREKIIETFYKIRKIEVNDDTKREITGQYLATNITIKENMTYRAGDKITLQDIEDFLQNGVKEINLIDFDGYDSVPGKHFISSDVILNCFEKEDAYFALKDGFKELSRESVMLAVYSVLLPGEPISIDNAENDLRTVFFSEKRYDLGHVGRYKLSKKFGLDDLTTSVLTMTDIVNTISHLLRIYDGHDVLDDIDHLGNRRVRSVGELLTNIYKGAMSRVEKIAKDRMSNKEVFNLKPQELISVKPVVSAVKEFFATSQLSQFMDQVNPLAELTHKRRLNALGPGGLSRDRAGFEVRDVHYTHYGRMCPIETPEGPNIGLIVSLATYSKVNDYGFLETPYRKVIDGKVTDDIEYLSAIDEEKKCIAQANASVSSDGNYTDDLVSVRISGDYTTMMPKNIDYMDVSPRQLISVSSALIPFLEHNDANRALMGSNMQRQAVPLLFPQPPIVGTGMERIVAKDSGVVIKAKRPGRVVLATNKKIVIKPDNATSERDLDEYELYKYERTNQDTSFNHSVLVKNGQIVNKDEIIADGPATRYGELALGNNLLVGFIPWNGFNYEDAILISERIVKEDLYTSIHIKEFSIEVRETKLGPEKVTADIPNVSGKILSKLDENGIVRIGTYVKPGDILIGKVTPKSEGDITPEFKLLTSIFGEKAKDVKNNSLKVPHGTEGTVIDVQRITKDDVGNLPPGVDEILKVYIAKKRKLKEGDKMAGRHGNKGVVAKILPVEDMPYLADGTPLDICLNPLGVPSRMNIGQLMESQLGLAGKYLGEYYDVPVFESATNECIQEKLKKAGFNETSKAVLYDGYTGEPFENEVMVGVIYMLKLHHLVDDKMHARSTGPYSLVSQQPLGGKAQFGGQRLGEMEVWALEAYGAAHTLQELLTVKSDDMSGRVKIYENIVKGIPTNVSGIPESFNVLMQELRGLGFDLSIYDDNGNQIPLTEKEEELINKT.

The protein belongs to the RNA polymerase beta chain family. As to quaternary structure, the RNAP catalytic core consists of 2 alpha, 1 beta, 1 beta' and 1 omega subunit. When a sigma factor is associated with the core the holoenzyme is formed, which can initiate transcription.

It carries out the reaction RNA(n) + a ribonucleoside 5'-triphosphate = RNA(n+1) + diphosphate. Functionally, DNA-dependent RNA polymerase catalyzes the transcription of DNA into RNA using the four ribonucleoside triphosphates as substrates. The polypeptide is DNA-directed RNA polymerase subunit beta (Borrelia duttonii (strain Ly)).